Consider the following 507-residue polypeptide: Phosphoprotein (507 aa).

Residues 31 to 51 (EVSSLRDQTCNPGQENGTTGM) are compositionally biased toward polar residues. Disordered regions lie at residues 31-86 (EVSS…CGER), 123-172 (IEDA…GYSF), and 242-307 (GIVA…DSEY). Positions 147–160 (SLDDSTEDSGEDYS) are enriched in acidic residues. Ser151 is subject to Phosphoserine. Polar residues-rich tracts occupy residues 246-271 (GSTS…SAGN) and 289-300 (SGTQLPPRTSNE). A multimerization region spans residues 304–376 (DSEYDDELFS…LSSIMIAIPG (73 aa)). Residues 310-339 (ELFSEIQEIRSAITKLTEDNQAILTKLDTL) are a coiled coil. An interaction with the nucleocapsid (N-RNA) region spans residues 459 to 507 (PSKAVLASLIRSSRVDQSHKHNMLALLKNIKGDDNLNEFYQMVKSITHA).

Belongs to the morbillivirus P protein family. Homotetramer. Interacts (via multimerization domain) with polymerase L; this interaction forms the polymerase L-P complex. Interacts (via N-terminus) with N0 (via Ncore); this interaction allows P to chaperon N0 to avoid N polymerization before encapsidation. Interacts (via C-terminus) with N-RNA template; this interaction positions the polymerase on the template for both transcription and replication. Phosphorylation on serines by host CK2 is necessary for the formation of viral factories.

In terms of biological role, essential cofactor of the RNA polymerase L that plays a central role in the transcription and replication by forming the polymerase complex with RNA polymerase L and recruiting L to the genomic N-RNA template for RNA synthesis. Also plays a central role in the encapsidation of nascent RNA chains by forming the encapsidation complex with the nucleocapsid protein N (N-P complex). Acts as a chaperone for newly synthesized free N protein, so-called N0, allowing encapsidation of nascent RNA chains during replication. The nucleoprotein protein N prevents excessive phosphorylation of P, which leads to down-regulation of viral transcription/ replication. Participates, together with N, in the formation of viral factories (viroplasms), which are large inclusions in the host cytoplasm where replication takes place. The polypeptide is Phosphoprotein (P/V) (Canine distemper virus (strain Onderstepoort) (CDV)).